The sequence spans 175 residues: Gamma-crystallin-1 (175 aa).

Beta/gamma crystallin 'Greek key' domains follow at residues 2-40 and 41-83; these read GKIF…RVEG and GNWI…RFLP. The segment at 84–88 is connecting peptide; that stretch reads NYQGQ. 2 consecutive Beta/gamma crystallin 'Greek key' domains span residues 89-129 and 130-172; these read YKMR…NVFD and GHWM…RRVY.

The protein belongs to the beta/gamma-crystallin family. Monomer.

Functionally, crystallins are the dominant structural components of the vertebrate eye lens. The polypeptide is Gamma-crystallin-1 (cryg1) (Xenopus laevis (African clawed frog)).